We begin with the raw amino-acid sequence, 23 residues long: Aurein-4.3 (23 aa).

Belongs to the frog skin active peptide (FSAP) family. Aurein subfamily. Expressed by the skin dorsal glands.

The protein resides in the secreted. Its function is as follows. Has no antimicrobial or anticancer activity. This chain is Aurein-4.3, found in Ranoidea aurea (Green and golden bell frog).